A 299-amino-acid polypeptide reads, in one-letter code: Taste receptor type 2 member 5 (299 aa).

Residue M1 is a topological domain, extracellular. The chain crosses the membrane as a helical span at residues 2–22 (LSAGLGLLMLVAVIEFLIGLI). Residues 23 to 45 (GNGILVVWSLREWIRKFSWSSYN) are Cytoplasmic-facing. The helical transmembrane segment at 46–66 (LIILGLAGCRFLLQWLIILDL) threads the bilayer. Topologically, residues 67–82 (SLFPLFQSSSWLRYLN) are extracellular. A helical membrane pass occupies residues 83-103 (VFWVLVSQASLWFATFLSVFY). At 104-127 (CKKITTFDRPAYLWLKQRAYNLSL) the chain is on the cytoplasmic side. The chain crosses the membrane as a helical span at residues 128 to 148 (WCLLGYFIISLLLTVQVGLTV). Topologically, residues 149-175 (HHPPQGNSSIRYPFEHWQYLYVFQLNS) are extracellular. A glycan (N-linked (GlcNAc...) asparagine) is linked at N155. A helical membrane pass occupies residues 176–196 (GSYLPLMVFLVSSGMLIISLY). Residues 197–223 (THHKKMKVHSAGRRDARAKAHITALKS) lie on the Cytoplasmic side of the membrane. A helical transmembrane segment spans residues 224-244 (LGCFLLLHLVYIVASPFSITS). Residues 245-253 (KTYPPDLTS) are Extracellular-facing. A helical membrane pass occupies residues 254–274 (VFIWETLMAAYPSLHSLMLIM). At 275–299 (GIPRVKQTCQKILWKTVCARRCWGP) the chain is on the cytoplasmic side.

It belongs to the G-protein coupled receptor T2R family.

It is found in the membrane. Receptor that may play a role in the perception of bitterness and is gustducin-linked. May play a role in sensing the chemical composition of the gastrointestinal content. The activity of this receptor may stimulate alpha gustducin, mediate PLC-beta-2 activation and lead to the gating of TRPM5. The chain is Taste receptor type 2 member 5 (TAS2R5) from Papio hamadryas (Hamadryas baboon).